Reading from the N-terminus, the 1975-residue chain is Golgi-specific brefeldin A-resistance guanine nucleotide exchange factor 1 homolog (1975 aa).

2 disordered regions span residues 216 to 243 (NPTEKRQKRKKKRQLSVHIETKAKEPEN) and 299 to 352 (ISAG…EEKM). A compositionally biased stretch (basic residues) spans 221-230 (RQKRKKKRQL). The SEC7 domain maps to 624–812 (QIIEQKKRKR…ADMYQAIKTE (189 aa)). The span at 1264–1277 (QSLRVGGDQQQQRM) shows a compositional bias: polar residues. Disordered stretches follow at residues 1264–1318 (QSLR…DLES), 1447–1473 (DEKAVKKHHHHHHGHKKKELCTDVTED), 1699–1751 (IKDT…ATAQ), 1788–1854 (VHSG…QYAY), and 1877–1975 (YANQ…QEKP). Residues 1291 to 1309 (GAHEERAYTSEGEERRRGG) are compositionally biased toward basic and acidic residues. The segment covering 1451 to 1464 (VKKHHHHHHGHKKK) has biased composition (basic residues). Positions 1734-1751 (SNSTAATSTSDPSIATAQ) are enriched in low complexity. The span at 1797 to 1808 (GSPPQTEPPASS) shows a compositional bias: pro residues. Low complexity-rich tracts occupy residues 1820–1854 (YEQYRQQQAAAAQQYQQYNQNYPQQQQQQQQQYAY) and 1877–1894 (YANQYQHYQQQQQQQQQH). Residues 1895–1909 (PVNPTSPSVHGQYSV) are compositionally biased toward polar residues. The segment covering 1938–1957 (TPPQNNAPALAPSAPTTTSA) has biased composition (low complexity).

It is found in the golgi apparatus. The protein localises to the cis-Golgi network. Its subcellular location is the endoplasmic reticulum-Golgi intermediate compartment. Guanine-nucleotide exchange factor (GEF) for members of the Arf family of small GTPases involved in trafficking in the early secretory pathway; its GEF activity initiates the coating of nascent vesicles via the localized generation of activated ARFs through replacement of GDP with GTP. Also, plays a role in receptor-mediated endocytosis in oocytes and endosomal trafficking. Involved in vesicle retrograde transport from the ERGIC and cis-Golgi compartments to the endoplasmic reticulum (ER). Plays a role in maintaining mitochondrial morphology, network organization and function. May be required for the basolateral cell membrane localization of the serine threonine protein kinase sgk-1 in intestinal cells. This chain is Golgi-specific brefeldin A-resistance guanine nucleotide exchange factor 1 homolog, found in Caenorhabditis elegans.